A 320-amino-acid chain; its full sequence is Glutathione synthetase (320 aa).

The ATP-grasp domain occupies 127-312; the sequence is KLAITEFPRF…VAGLMIDALE (186 aa). 153–209 provides a ligand contact to ATP; sequence LAEHEDIILKPLDGMGGAGIFRIQNTDHNIGVIIETLTRYGTRTIMAQRFLPEIREG. E283 and N285 together coordinate Mg(2+).

The protein belongs to the prokaryotic GSH synthase family. The cofactor is Mg(2+). It depends on Mn(2+) as a cofactor.

The catalysed reaction is gamma-L-glutamyl-L-cysteine + glycine + ATP = glutathione + ADP + phosphate + H(+). It participates in sulfur metabolism; glutathione biosynthesis; glutathione from L-cysteine and L-glutamate: step 2/2. The chain is Glutathione synthetase from Nitrosomonas europaea (strain ATCC 19718 / CIP 103999 / KCTC 2705 / NBRC 14298).